The chain runs to 321 residues: 5,10-methylenetetrahydromethanopterin reductase (321 aa).

It belongs to the mer family. Homotetramer.

The protein resides in the cytoplasm. It carries out the reaction 5-methyl-5,6,7,8-tetrahydromethanopterin + oxidized coenzyme F420-(gamma-L-Glu)(n) + H(+) = 5,10-methylenetetrahydromethanopterin + reduced coenzyme F420-(gamma-L-Glu)(n). Its pathway is one-carbon metabolism; methanogenesis from CO(2); methyl-coenzyme M from 5,10-methylene-5,6,7,8-tetrahydromethanopterin: step 1/2. In terms of biological role, catalyzes the reversible reduction of methylene-H(4)MPT to methyl-H(4)MPT. This is 5,10-methylenetetrahydromethanopterin reductase from Methanothermobacter marburgensis (strain ATCC BAA-927 / DSM 2133 / JCM 14651 / NBRC 100331 / OCM 82 / Marburg) (Methanobacterium thermoautotrophicum).